The following is a 199-amino-acid chain: Pneumococcal vaccine antigen A homolog (199 aa).

The protein resides in the cell surface. The polypeptide is Pneumococcal vaccine antigen A homolog (pvaA) (Streptococcus pyogenes serotype M18 (strain MGAS8232)).